A 213-amino-acid chain; its full sequence is Orotate phosphoribosyltransferase (213 aa).

Lys26 contributes to the 5-phospho-alpha-D-ribose 1-diphosphate binding site. 34–35 (FF) provides a ligand contact to orotate. Residues 72-73 (YK), Arg99, Lys100, Lys103, His105, and 124-132 (DDVITAGTA) each bind 5-phospho-alpha-D-ribose 1-diphosphate. Orotate contacts are provided by Thr128 and Arg156.

It belongs to the purine/pyrimidine phosphoribosyltransferase family. PyrE subfamily. As to quaternary structure, homodimer. Mg(2+) is required as a cofactor.

The catalysed reaction is orotidine 5'-phosphate + diphosphate = orotate + 5-phospho-alpha-D-ribose 1-diphosphate. It participates in pyrimidine metabolism; UMP biosynthesis via de novo pathway; UMP from orotate: step 1/2. In terms of biological role, catalyzes the transfer of a ribosyl phosphate group from 5-phosphoribose 1-diphosphate to orotate, leading to the formation of orotidine monophosphate (OMP). This chain is Orotate phosphoribosyltransferase, found in Haemophilus influenzae (strain ATCC 51907 / DSM 11121 / KW20 / Rd).